The sequence spans 1019 residues: Mediator of replication checkpoint protein 1 (1019 aa).

Disordered stretches follow at residues 1–33 (MASL…LDTP), 105–143 (QGGK…DRNS), 166–202 (NSAT…SDRK), 261–290 (EEEA…IVNS), 443–683 (IQGE…SKTF), and 965–1019 (TQRP…SDFD). Residues 17-30 (SDEASINDDQEDIL) show a composition bias toward acidic residues. The span at 177-191 (LDSESADDSDLADES) shows a compositional bias: acidic residues. Composition is skewed to basic and acidic residues over residues 192-202 (ELSKKYTSDRK), 271-281 (NVEKEEPKPSV), and 454-468 (LERA…RQLE). The span at 476–486 (DEGELNDEEEV) shows a compositional bias: acidic residues. The segment covering 487-503 (ISSSNTPSTKAKTTNKV) has biased composition (polar residues). Residues 556 to 580 (MIRDSFDRLSSESIKDSQKTEELHD) are compositionally biased toward basic and acidic residues. Polar residues-rich tracts occupy residues 590-607 (QSTS…SQLT) and 630-658 (NTSS…IDSV). Phosphoserine is present on Ser604. The residue at position 645 (Thr645) is a Phosphothreonine. Residues 671–681 (EERRESRRDSK) are compositionally biased toward basic and acidic residues.

In terms of assembly, interacts with cds1. Phosphorylated by rad3 and tel1.

It localises to the nucleus. Component of the replisome and is required for rad3-dependent activation of the checkpoint kinase cds1 in response to replication fork arrest. Phosphorylation allows it to mediate the activation of cds1. This Schizosaccharomyces pombe (strain 972 / ATCC 24843) (Fission yeast) protein is Mediator of replication checkpoint protein 1 (mrc1).